We begin with the raw amino-acid sequence, 273 residues long: Putative phosphoenolpyruvate synthase regulatory protein (273 aa).

Residue 153 to 160 (AVSRAGKT) coordinates ADP.

The protein belongs to the pyruvate, phosphate/water dikinase regulatory protein family. PSRP subfamily.

It catalyses the reaction [pyruvate, water dikinase] + ADP = [pyruvate, water dikinase]-phosphate + AMP + H(+). The enzyme catalyses [pyruvate, water dikinase]-phosphate + phosphate + H(+) = [pyruvate, water dikinase] + diphosphate. In terms of biological role, bifunctional serine/threonine kinase and phosphorylase involved in the regulation of the phosphoenolpyruvate synthase (PEPS) by catalyzing its phosphorylation/dephosphorylation. The protein is Putative phosphoenolpyruvate synthase regulatory protein of Xylella fastidiosa (strain M12).